A 196-amino-acid chain; its full sequence is Lipoprotein signal peptidase (196 aa).

The tract at residues 1 to 24 (MAEAERIIGMPENPDVDGTDEGGS) is disordered. 3 helical membrane passes run 40-60 (ILALLSVAVVAYLLDLGSKML), 92-112 (IGEAFTVIFTIIATGVIVVIF), and 118-138 (LYSLPWAIALGLLLGGALGNL). Residues aspartate 155 and aspartate 169 contribute to the active site. Residues 164–184 (VFNLADSAIVCGGILIVILSF) form a helical membrane-spanning segment.

The protein belongs to the peptidase A8 family.

It is found in the cell membrane. It carries out the reaction Release of signal peptides from bacterial membrane prolipoproteins. Hydrolyzes -Xaa-Yaa-Zaa-|-(S,diacylglyceryl)Cys-, in which Xaa is hydrophobic (preferably Leu), and Yaa (Ala or Ser) and Zaa (Gly or Ala) have small, neutral side chains.. It functions in the pathway protein modification; lipoprotein biosynthesis (signal peptide cleavage). Its function is as follows. This protein specifically catalyzes the removal of signal peptides from prolipoproteins. This chain is Lipoprotein signal peptidase, found in Streptomyces griseus subsp. griseus (strain JCM 4626 / CBS 651.72 / NBRC 13350 / KCC S-0626 / ISP 5235).